A 412-amino-acid chain; its full sequence is Arginine biosynthesis bifunctional protein ArgJ (412 aa).

6 residues coordinate substrate: Thr162, Lys188, Thr199, Glu285, Asn407, and Thr412. Catalysis depends on Thr199, which acts as the Nucleophile.

Belongs to the ArgJ family. As to quaternary structure, heterotetramer of two alpha and two beta chains.

The protein resides in the cytoplasm. It catalyses the reaction N(2)-acetyl-L-ornithine + L-glutamate = N-acetyl-L-glutamate + L-ornithine. The enzyme catalyses L-glutamate + acetyl-CoA = N-acetyl-L-glutamate + CoA + H(+). It participates in amino-acid biosynthesis; L-arginine biosynthesis; L-ornithine and N-acetyl-L-glutamate from L-glutamate and N(2)-acetyl-L-ornithine (cyclic): step 1/1. Its pathway is amino-acid biosynthesis; L-arginine biosynthesis; N(2)-acetyl-L-ornithine from L-glutamate: step 1/4. In terms of biological role, catalyzes two activities which are involved in the cyclic version of arginine biosynthesis: the synthesis of N-acetylglutamate from glutamate and acetyl-CoA as the acetyl donor, and of ornithine by transacetylation between N(2)-acetylornithine and glutamate. The chain is Arginine biosynthesis bifunctional protein ArgJ from Staphylococcus saprophyticus subsp. saprophyticus (strain ATCC 15305 / DSM 20229 / NCIMB 8711 / NCTC 7292 / S-41).